A 785-amino-acid polypeptide reads, in one-letter code: MERVLRVLEYEKMKKQLLEHVSSSLGRKKVEQLTPSTDFNKVKLWQAQTQEGANMLRLKGHVPLGGIFDIKPHLKRAKIGGLLHASELLEVASTIYGGRQLKKFIETMIEEEEADLPLLGEFARQIVPLTDLERAIKQCIDDNGHVLDSASPTLRTLRHQIRSFEANVRSKLEGITRSSNTAKMLSDAIVTIRNDRYVIPVKQEYRGAFGGIVHDQSASGATLFVEPQAVVEINNQLREAKAKEQREIERILSELSMQVSEHVDDLFVNVDVLAELDFIMARAHYGKAIRATQPILNNRGYLLIKQGRHPLIPDDEIVPIDIELGHSYSSLVITGPNTGGKTVTLKTIGLLTLMAQSGLHVPAEEESELAVFKHVFADIGDEQSIEQSLSTFSSHMTNIVDILGKVDHESLVLFDELGAGTDPTEGAALAIAILDDVYRRGARIVATTHYSELKGYAYNREGVMNASVEFDVETLSPTYRLLIGVPGRSNAFAISKRLGLEEKIIEQAKAHIDEDASQVESMIASLEQSQKSAESDWEEAEKALQEAEQLRLDLQKKLDDLEKEKERILAEAEQQAEQAVKDAKEEAEVIISELRDLQKQGVSVKEHQIIDAKKHLEEAAPKLTKQQKKVKRTAEKKREFKPGDEVKVLSFGQKGHIVEKVSEAEYQVQMGIMKMKVEASDLQLIDRPQPVETKPLATIRGSDHHVKPELDLRGERYEEAMLKVEKYLDDALLAGYASVSIIHGKGTGALRKGVKDLLKRHPHVKSARDGGANEGGLGNTVVELR.

Position 335–342 (335–342 (GPNTGGKT)) interacts with ATP. Residues 710–785 (LDLRGERYEE…GLGNTVVELR (76 aa)) form the Smr domain. The interval 764 to 785 (VKSARDGGANEGGLGNTVVELR) is disordered.

Belongs to the DNA mismatch repair MutS family. MutS2 subfamily. Homodimer. Binds to stalled ribosomes, contacting rRNA.

Functionally, endonuclease that is involved in the suppression of homologous recombination and thus may have a key role in the control of bacterial genetic diversity. Acts as a ribosome collision sensor, splitting the ribosome into its 2 subunits. Detects stalled/collided 70S ribosomes which it binds and splits by an ATP-hydrolysis driven conformational change. Acts upstream of the ribosome quality control system (RQC), a ribosome-associated complex that mediates the extraction of incompletely synthesized nascent chains from stalled ribosomes and their subsequent degradation. Probably generates substrates for RQC. In Halalkalibacterium halodurans (strain ATCC BAA-125 / DSM 18197 / FERM 7344 / JCM 9153 / C-125) (Bacillus halodurans), this protein is Endonuclease MutS2.